The following is a 540-amino-acid chain: (13S,14R)-13-O-acetyl-1-hydroxy-N-methylcanadine 8-hydroxylase CYP82X1 (540 aa).

A helical transmembrane segment spans residues phenylalanine 15–valine 35. Residue cysteine 483 participates in heme binding.

It belongs to the cytochrome P450 family. Heme is required as a cofactor. In terms of tissue distribution, highly expressed in capsules. Expressed is stems.

The protein resides in the membrane. The catalysed reaction is (13S,14R)-13-O-acetyl-1-hydroxy-N-methylcanadine + reduced [NADPH--hemoprotein reductase] + O2 = (13S,14R)-13-O-acetyl-1,8-dihydroxy-N-methylcanadine + oxidized [NADPH--hemoprotein reductase] + H2O + H(+). It functions in the pathway alkaloid biosynthesis. Functionally, cytochrome P450 involved in the biosynthesis of the benzylisoquinoline alkaloid noscapine. Converts (13S,14R)-13-O-acetyl-1-hydroxy-N-methylcanadine to (13S,14R)-13-O-acetyl-1,8-dihydroxy-N-methylcanadine. In Papaver somniferum (Opium poppy), this protein is (13S,14R)-13-O-acetyl-1-hydroxy-N-methylcanadine 8-hydroxylase CYP82X1.